The following is a 382-amino-acid chain: PqqA peptide cyclase (382 aa).

The Radical SAM core domain occupies 8–223 (VKPPLWLLAE…VHRYREKMAA (216 aa)). Residues C22, C26, and C29 each coordinate [4Fe-4S] cluster.

It belongs to the radical SAM superfamily. PqqE family. In terms of assembly, interacts with PqqD. The interaction is necessary for activity of PqqE. The cofactor is [4Fe-4S] cluster.

The enzyme catalyses [PQQ precursor protein] + S-adenosyl-L-methionine = E-Y cross-linked-[PQQ precursor protein] + 5'-deoxyadenosine + L-methionine + H(+). It participates in cofactor biosynthesis; pyrroloquinoline quinone biosynthesis. Catalyzes the cross-linking of a glutamate residue and a tyrosine residue in the PqqA protein as part of the biosynthesis of pyrroloquinoline quinone (PQQ). This chain is PqqA peptide cyclase, found in Erwinia tasmaniensis (strain DSM 17950 / CFBP 7177 / CIP 109463 / NCPPB 4357 / Et1/99).